A 309-amino-acid polypeptide reads, in one-letter code: Ferrochelatase (309 aa).

Residues H185 and E262 each contribute to the Fe cation site.

The protein belongs to the ferrochelatase family.

The protein resides in the cytoplasm. The catalysed reaction is heme b + 2 H(+) = protoporphyrin IX + Fe(2+). It functions in the pathway porphyrin-containing compound metabolism; protoheme biosynthesis; protoheme from protoporphyrin-IX: step 1/1. Its function is as follows. Catalyzes the ferrous insertion into protoporphyrin IX. In Campylobacter jejuni subsp. jejuni serotype O:6 (strain 81116 / NCTC 11828), this protein is Ferrochelatase.